A 231-amino-acid polypeptide reads, in one-letter code: Glutathione-S-transferase (231 aa).

The GST N-terminal domain occupies 15 to 98; that stretch reads LFAVKGTATS…YIADAYDKDG (84 aa).

The protein belongs to the GST superfamily.

It carries out the reaction RX + glutathione = an S-substituted glutathione + a halide anion + H(+). In terms of biological role, conjugation of reduced glutathione to a wide number of exogenous and endogenous hydrophobic electrophiles. In Alternaria alternata (Alternaria rot fungus), this protein is Glutathione-S-transferase.